Consider the following 605-residue polypeptide: Isocitrate dehydrogenase kinase/phosphatase (605 aa).

ATP is bound by residues 327–333 (APGIKGL) and Lys-348. Asp-383 is an active-site residue.

This sequence belongs to the AceK family.

It is found in the cytoplasm. It carries out the reaction L-seryl-[isocitrate dehydrogenase] + ATP = O-phospho-L-seryl-[isocitrate dehydrogenase] + ADP + H(+). In terms of biological role, bifunctional enzyme which can phosphorylate or dephosphorylate isocitrate dehydrogenase (IDH) on a specific serine residue. This is a regulatory mechanism which enables bacteria to bypass the Krebs cycle via the glyoxylate shunt in response to the source of carbon. When bacteria are grown on glucose, IDH is fully active and unphosphorylated, but when grown on acetate or ethanol, the activity of IDH declines drastically concomitant with its phosphorylation. This chain is Isocitrate dehydrogenase kinase/phosphatase, found in Burkholderia orbicola (strain AU 1054).